Reading from the N-terminus, the 859-residue chain is Alanine--tRNA ligase (859 aa).

Zn(2+) contacts are provided by H562, H566, C664, and H668.

The protein belongs to the class-II aminoacyl-tRNA synthetase family. It depends on Zn(2+) as a cofactor.

The protein localises to the cytoplasm. The enzyme catalyses tRNA(Ala) + L-alanine + ATP = L-alanyl-tRNA(Ala) + AMP + diphosphate. Catalyzes the attachment of alanine to tRNA(Ala) in a two-step reaction: alanine is first activated by ATP to form Ala-AMP and then transferred to the acceptor end of tRNA(Ala). Also edits incorrectly charged Ser-tRNA(Ala) and Gly-tRNA(Ala) via its editing domain. The polypeptide is Alanine--tRNA ligase (Aliivibrio fischeri (strain ATCC 700601 / ES114) (Vibrio fischeri)).